Consider the following 150-residue polypeptide: MKLTSKGRYAVTAVLDIALNADGGPVSLADISERQHISLSYLEQLFAKLRKDGLVKSVRGPGGGYQLGLPSEQISVGMIIAAVNENIHVTKCLGRENCKNGVECLTHELWEDLSLRIESFLNEITLAELVNKRNVKRQSHRDFNNLLVNQ.

Residues 2-131 (KLTSKGRYAV…NEITLAELVN (130 aa)) form the HTH rrf2-type domain.

In Haemophilus influenzae (strain ATCC 51907 / DSM 11121 / KW20 / Rd), this protein is Putative HTH-type transcriptional regulator HI_0379.